The chain runs to 287 residues: Damage-control phosphatase PH1575 (287 aa).

The Subfamily I CxxC motif signature appears at 7-10 (CLTC). Asp156, Asn157, and Asp191 together coordinate Mn(2+). The short motif at 243-246 (GNFE) is the Subfamily I GNFE motif element. The Subfamily I KC motif signature appears at 263-264 (KC).

It belongs to the damage-control phosphatase family. Nucleotides phosphatase I subfamily. Requires Mn(2+) as cofactor. Ni(2+) is required as a cofactor. It depends on [2Fe-2S] cluster as a cofactor.

With respect to regulation, activity is strongly promoted by Co(2+), Ni(2+), Mg(2+), Mn(2+), Ca(2+), Zn(2+) and Cu(2+). Activity is inhibited by EDTA. Its function is as follows. Metal-dependent phosphatase with probable damage-control functions. Shows phosphatase activity against p-nitrophenyl phosphate (pNPP), but natural substrates have not been identified yet. Low phosphatase activity against 8-oxo nucleotides suggests that it could hydrolyze oxidatively damaged purine nucleotides or their biosynthetic intermediates. The polypeptide is Damage-control phosphatase PH1575 (Pyrococcus horikoshii (strain ATCC 700860 / DSM 12428 / JCM 9974 / NBRC 100139 / OT-3)).